The sequence spans 180 residues: GTP cyclohydrolase 1 (180 aa).

Zn(2+) contacts are provided by C71, H74, and C142.

The protein belongs to the GTP cyclohydrolase I family. In terms of assembly, toroid-shaped homodecamer, composed of two pentamers of five dimers.

It carries out the reaction GTP + H2O = 7,8-dihydroneopterin 3'-triphosphate + formate + H(+). Its pathway is cofactor biosynthesis; 7,8-dihydroneopterin triphosphate biosynthesis; 7,8-dihydroneopterin triphosphate from GTP: step 1/1. The sequence is that of GTP cyclohydrolase 1 (folE) from Helicobacter pylori (strain J99 / ATCC 700824) (Campylobacter pylori J99).